Reading from the N-terminus, the 621-residue chain is Putative 5'-3' exonuclease R528 (621 aa).

Belongs to the 5'-3' exonuclease family.

It localises to the virion. The protein is Putative 5'-3' exonuclease R528 of Acanthamoeba polyphaga mimivirus (APMV).